Reading from the N-terminus, the 373-residue chain is SWI/SNF-related matrix-associated actin-dependent regulator of chromatin subfamily B member 1 (373 aa).

The tract at residues 1–101 (MALSKAFGQK…DEKYKAVSIS (101 aa)) is DNA-binding.

This sequence belongs to the SNF5 family. As to quaternary structure, component of the multiprotein chromatin-remodeling complexes SWI/SNF. Component of neural progenitors-specific chromatin remodeling complex (npBAF complex) and the neuron-specific chromatin remodeling complex (nBAF complex). Component of the BAF (SWI/SNF) chromatin remodeling complex. Component of the SWI/SNF-B (PBAF) chromatin remodeling complex. Binds to double-stranded DNA.

Its subcellular location is the nucleus. In terms of biological role, involved in chromatin-remodeling. Core component of the BAF (SWI/SNF) complex. This ATP-dependent chromatin-remodeling complex plays important roles in cell proliferation and differentiation, in cellular antiviral activities and inhibition of tumor formation. Belongs to the neural progenitors-specific chromatin remodeling complex (npBAF complex) and the neuron-specific chromatin remodeling complex (nBAF complex) and may play a role in neural development. The protein is SWI/SNF-related matrix-associated actin-dependent regulator of chromatin subfamily B member 1 (smarcb1) of Dichotomyctere fluviatilis (Green pufferfish).